The chain runs to 180 residues: MSVKIRLQRHGKKGKPFYWVVAADARSKRDGKYLEKIGTYNPNTNPATVDLNLDAAVKWLHNGAQPTDTARAILSYKGALLKHHLDGGVRKGALTQDQADAKLATWIEAKSGKVDAKKEGLTKAQSDAKAKAFKAETVANEKRIATQTEAAKALEAVVEEATTEEVVETATEEANEEKEA.

This sequence belongs to the bacterial ribosomal protein bS16 family.

This chain is Small ribosomal subunit protein bS16, found in Flavobacterium psychrophilum (strain ATCC 49511 / DSM 21280 / CIP 103535 / JIP02/86).